The chain runs to 434 residues: Urokinase-type plasminogen activator (434 aa).

The N-terminal stretch at 1-20 (MKLIIFLTVTLCTLVTGLDS) is a signal peptide. The region spanning 36–72 (QHRECQCLNGGTCITYRFFSQIKRCLCPEGYGGLHCE) is the EGF-like domain. Intrachain disulfides connect cysteine 40/cysteine 48, cysteine 42/cysteine 60, cysteine 62/cysteine 71, cysteine 79/cysteine 158, cysteine 96/cysteine 139, cysteine 128/cysteine 152, cysteine 162/cysteine 296, cysteine 202/cysteine 218, cysteine 210/cysteine 285, cysteine 310/cysteine 379, cysteine 342/cysteine 358, and cysteine 369/cysteine 397. Residues 79 to 158 (CYSGNGEDYR…ETPCSTIEKC (80 aa)) form the Kringle domain. Residues 159–172 (ERTCGQRSFSKYFK) form a connecting peptide region. In terms of domain architecture, Peptidase S1 spans 173-421 (IVGGSQAEVE…YLNWIDSNMN (249 aa)). Histidine 217 (charge relay system) is an active-site residue. Asparagine 228 carries N-linked (GlcNAc...) asparagine glycosylation. Catalysis depends on aspartate 272, which acts as the Charge relay system. The active-site Charge relay system is serine 373.

Belongs to the peptidase S1 family.

It is found in the secreted. The catalysed reaction is Specific cleavage of Arg-|-Val bond in plasminogen to form plasmin.. Functionally, specifically cleaves the zymogen plasminogen to form the active enzyme plasmin. The protein is Urokinase-type plasminogen activator (PLAU) of Gallus gallus (Chicken).